The sequence spans 171 residues: Large ribosomal subunit protein uL10 (171 aa).

Belongs to the universal ribosomal protein uL10 family. In terms of assembly, part of the ribosomal stalk of the 50S ribosomal subunit. The N-terminus interacts with L11 and the large rRNA to form the base of the stalk. The C-terminus forms an elongated spine to which L12 dimers bind in a sequential fashion forming a multimeric L10(L12)X complex.

In terms of biological role, forms part of the ribosomal stalk, playing a central role in the interaction of the ribosome with GTP-bound translation factors. This is Large ribosomal subunit protein uL10 from Methylocella silvestris (strain DSM 15510 / CIP 108128 / LMG 27833 / NCIMB 13906 / BL2).